We begin with the raw amino-acid sequence, 157 residues long: 3-hydroxyacyl-[acyl-carrier-protein] dehydratase FabZ (157 aa).

The active site involves H58.

Belongs to the thioester dehydratase family. FabZ subfamily.

Its subcellular location is the cytoplasm. The catalysed reaction is a (3R)-hydroxyacyl-[ACP] = a (2E)-enoyl-[ACP] + H2O. Its function is as follows. Involved in unsaturated fatty acids biosynthesis. Catalyzes the dehydration of short chain beta-hydroxyacyl-ACPs and long chain saturated and unsaturated beta-hydroxyacyl-ACPs. The polypeptide is 3-hydroxyacyl-[acyl-carrier-protein] dehydratase FabZ (Brucella abortus biovar 1 (strain 9-941)).